The following is a 411-amino-acid chain: Translation initiation factor 2 subunit gamma (411 aa).

The tr-type G domain maps to 9-203; that stretch reads QAEVNIGMVG…AIEEFIPTPK (195 aa). Positions 18–25 are G1; that stretch reads GHVDHGKT. Positions 21, 25, 46, and 48 each coordinate Mg(2+). 21-26 is a binding site for GTP; it reads DHGKTT. Residues 46–50 are G2; sequence GITIK. Zn(2+) contacts are provided by C61, C64, C73, and C76. Residues 90–93 form a G3 region; sequence DSPG. GTP contacts are provided by residues 146–149 and 181–183; these read NKIE and SAL. A G4 region spans residues 146–149; it reads NKIE. The G5 stretch occupies residues 181–183; that stretch reads SAL.

Belongs to the TRAFAC class translation factor GTPase superfamily. Classic translation factor GTPase family. EIF2G subfamily. As to quaternary structure, heterotrimer composed of an alpha, a beta and a gamma chain. Requires Mg(2+) as cofactor.

The enzyme catalyses GTP + H2O = GDP + phosphate + H(+). EIF-2 functions in the early steps of protein synthesis by forming a ternary complex with GTP and initiator tRNA. The sequence is that of Translation initiation factor 2 subunit gamma from Pyrococcus furiosus (strain ATCC 43587 / DSM 3638 / JCM 8422 / Vc1).